The chain runs to 254 residues: Phosphoglycerate mutase 1 (254 aa).

Substrate-binding positions include 10 to 17 (RHGESAWN) and 23 to 24 (SG). The Tele-phosphohistidine intermediate role is filled by H11. S14 and S23 each carry phosphoserine. A Phosphotyrosine modification is found at Y26. Residue S31 is modified to Phosphoserine. Residues R62, 89–92 (ERHY), and K100 each bind substrate. E89 acts as the Proton donor/acceptor in catalysis. Position 106 is an N6-acetyllysine (K106). Residue 116 to 117 (RR) participates in substrate binding. S118 carries the phosphoserine modification. A substrate-binding site is contributed by 187-188 (GN). K251 carries the post-translational modification N6-acetyllysine; alternate. At K251 the chain carries N6-succinyllysine; alternate. N6-acetyllysine occurs at positions 253 and 254.

This sequence belongs to the phosphoglycerate mutase family. BPG-dependent PGAM subfamily. In terms of assembly, homodimer. Post-translationally, acetylated at Lys-253, Lys-253 and Lys-254 under high glucose condition. Acetylation increases catalytic activity. Under glucose restriction SIRT1 levels dramatically increase and it deacetylates the enzyme. In terms of tissue distribution, expressed in the liver and brain. Not found in the muscle.

The catalysed reaction is (2R)-2-phosphoglycerate = (2R)-3-phosphoglycerate. It catalyses the reaction (2R)-3-phospho-glyceroyl phosphate = (2R)-2,3-bisphosphoglycerate + H(+). In terms of biological role, catalyzes the interconversion of 2-phosphoglycerate and 3-phosphoglyceratea crucial step in glycolysis, by using 2,3-bisphosphoglycerate. Also catalyzes the interconversion of (2R)-2,3-bisphosphoglycerate and (2R)-3-phospho-glyceroyl phosphate. The protein is Phosphoglycerate mutase 1 of Homo sapiens (Human).